Reading from the N-terminus, the 469-residue chain is tRNA (cytosine(72)-C(5))-methyltransferase NSUN6 (469 aa).

Positions 111–203 constitute a PUA domain; the sequence is QCEAIVGAQC…MGIRMTEPVY (93 aa). S-adenosyl-L-methionine contacts are provided by residues 242-248, aspartate 266, aspartate 293, and aspartate 323; that span reads CAAPGGK. Residue cysteine 373 is the Nucleophile of the active site. Lysine 419 is modified (N6-acetyllysine).

This sequence belongs to the class I-like SAM-binding methyltransferase superfamily. RsmB/NOP family.

It is found in the cytoplasm. The catalysed reaction is cytidine(72) in tRNA(Thr) + S-adenosyl-L-methionine = 5-methylcytidine(72) in tRNA(Thr) + S-adenosyl-L-homocysteine + H(+). The enzyme catalyses cytidine(72) in tRNA(Cys) + S-adenosyl-L-methionine = 5-methylcytidine(72) in tRNA(Cys) + S-adenosyl-L-homocysteine + H(+). S-adenosyl-L-methionine-dependent methyltransferase that specifically methylates the C5 position of cytosine 72 in tRNA(Thr)(TGT) and tRNA(Cys)(GCA). In vitro also methylates tRNA(Thr)(AGT). Methylation requires, in the acceptor stem region, the presence of the 3'-CCA terminus, the target site C72, the discriminator base U73, and the second and third base pairs (2:71 and 3:70) in the tRNA substrates. This chain is tRNA (cytosine(72)-C(5))-methyltransferase NSUN6, found in Homo sapiens (Human).